The chain runs to 712 residues: Probable serine/threonine-protein kinase fhkE (712 aa).

The 55-residue stretch at 46–100 (ITFGRLKDSTVHYNDKSISGSHCKITRESNDDDGVVIAFIYDNSTNGTFIDNIKV) folds into the FHA domain. A Protein kinase domain is found at 145–411 (YFIGEMLGQG…CNNIIQHPWF (267 aa)). ATP is bound by residues 151–159 (LGQGNFATV) and Lys-174. Asp-270 serves as the catalytic Proton acceptor. Positions 414–442 (NVKLSTLLEEDERLRKKAEAEVEANNNNT) form a coiled coil. The segment at 431–695 (AEAEVEANNN…KCQYDPNCYR (265 aa)) is disordered. 5 stretches are compositionally biased toward low complexity: residues 436–446 (EANNNNTNKSN), 459–481 (GNCSDSNNNNNSGSKSLSSIKSN), 514–571 (NNDN…SNDT), 595–605 (NLQNHLNNNKI), and 616–639 (NNNNNNNNNNNNNNNNNNNNNNNN). Residues 669-678 (PQNSSNNNSG) are compositionally biased toward polar residues.

The protein belongs to the protein kinase superfamily. CAMK Ser/Thr protein kinase family. CHK2 subfamily.

The enzyme catalyses L-seryl-[protein] + ATP = O-phospho-L-seryl-[protein] + ADP + H(+). It catalyses the reaction L-threonyl-[protein] + ATP = O-phospho-L-threonyl-[protein] + ADP + H(+). The protein is Probable serine/threonine-protein kinase fhkE (fhkE) of Dictyostelium discoideum (Social amoeba).